A 342-amino-acid polypeptide reads, in one-letter code: Succinylglutamate desuccinylase (342 aa).

Zn(2+) contacts are provided by His63, Glu66, and His155. The active site involves Glu219.

It belongs to the AspA/AstE family. Succinylglutamate desuccinylase subfamily. Zn(2+) serves as cofactor.

It carries out the reaction N-succinyl-L-glutamate + H2O = L-glutamate + succinate. It functions in the pathway amino-acid degradation; L-arginine degradation via AST pathway; L-glutamate and succinate from L-arginine: step 5/5. Its function is as follows. Transforms N(2)-succinylglutamate into succinate and glutamate. The sequence is that of Succinylglutamate desuccinylase from Vibrio vulnificus (strain CMCP6).